The primary structure comprises 680 residues: Epithelial splicing regulatory protein 1 (680 aa).

RRM domains lie at 224–301 (TVVR…KATG), 325–405 (VIVR…RSTA), and 444–524 (DCIR…QCSA). Position 542 is a phosphoserine (serine 542). Arginine 581 bears the Omega-N-methylarginine mark.

Belongs to the ESRP family. Epithelial cell-specific. Epithelial-specific expression in diverse tissues and organs with particularly notable levels of expression in skin and gastrointestinal epithelia.

The protein localises to the nucleus. In terms of biological role, mRNA splicing factor that regulates the formation of epithelial cell-specific isoforms. Specifically regulates the expression of FGFR2-IIIb, an epithelial cell-specific isoform of FGFR2. Also regulates the splicing of CD44, CTNND1, ENAH, 3 transcripts that undergo changes in splicing during the epithelial-to-mesenchymal transition (EMT). Acts by directly binding specific sequences in mRNAs. Binds the GU-rich sequence motifs in the ISE/ISS-3, a cis-element regulatory region present in the mRNA of FGFR2. Regulates splicing and expression of genes involved in inner ear development, auditory hair cell differentiation, and cell fate specification in the cochlear epithelium. The polypeptide is Epithelial splicing regulatory protein 1 (Esrp1) (Mus musculus (Mouse)).